Reading from the N-terminus, the 205-residue chain is Troponin I, cardiac muscle (205 aa).

A disordered region spans residues 1–38; the sequence is MADQSGNAAPPPVRRRSSANYRAYATEPHAKKKSKISA. N-acetylalanine is present on Ala-2. Position 5 is a phosphoserine (Ser-5). Phosphoserine; by PKA and PKD/PRKD1 occurs at positions 17 and 18. Tyr-21 bears the Phosphotyrosine mark. Thr-26 carries the post-translational modification Phosphothreonine; by STK4/MST1. Residues 27–74 are involved in binding TNC; that stretch reads EPHAKKKSKISASRKLQLKTLMLQIAKQELEREAVERRGEKGRALSTR. Phosphoserine; by PKC/PRKCE is present on residues Ser-37 and Ser-39. Thr-46 carries the post-translational modification Phosphothreonine; by STK4/MST1. Ser-72 bears the Phosphoserine mark. Thr-73 carries the phosphothreonine modification. An involved in binding TNC and actin region spans residues 124 to 145; that stretch reads NQKIFDLRGKFKRPTLRRVRIS. At Thr-138 the chain carries Phosphothreonine; by STK4/MST1. Ser-145 carries the post-translational modification Phosphoserine; by PAK3. A Phosphothreonine modification is found at Thr-176. Ser-194 is modified (phosphoserine).

It belongs to the troponin I family. Binds to actin and tropomyosin. Interacts with TRIM63. Interacts with STK4/MST1. In terms of processing, phosphorylated at Ser-17 and Ser-18 by PRKD1; phosphorylation reduces myofilament calcium sensitivity. Phosphorylated preferentially at Thr-26. Phosphorylation by STK4/MST1 alters its binding affinity to TNNC1 (cardiac Tn-C) and TNNT2 (cardiac Tn-T). Phosphorylated at Ser-37 and Ser-39 by PRKCE; phosphorylation increases myocardium contractile dysfunction.

In terms of biological role, troponin I is the inhibitory subunit of troponin, the thin filament regulatory complex which confers calcium-sensitivity to striated muscle actomyosin ATPase activity. The protein is Troponin I, cardiac muscle (TNNI3) of Equus caballus (Horse).